A 329-amino-acid chain; its full sequence is Mitochondrial substrate carrier family protein W (329 aa).

The Mitochondrial intermembrane portion of the chain corresponds to 1-39; it reads MTTNNSNDNNKRYGIIKQQLQQQQQQHHQQHEQHSRLVE. Solcar repeat units lie at residues 34–119, 133–221, and 231–321; these read HSRL…CKEL, ESPL…FKSI, and LGIV…IKKF. A helical membrane pass occupies residues 40 to 60; it reads MTAGCGAGFMASLFTTPLDVI. Topologically, residues 61–90 are mitochondrial matrix; it reads KTTLQVDNSSNKTIMSTVKSILDRKGGVKN. Residues 91–111 traverse the membrane as a helical segment; the sequence is LYLGLKPTLVGQIPSWAVYFS. At 112 to 135 the chain is on the mitochondrial intermembrane side; that stretch reads TYTFCKELFTKENDKHSLLEKESP. Residues 136–156 traverse the membrane as a helical segment; it reads LIFMTSAIIAGAATSICTSPI. Over 157 to 193 the chain is Mitochondrial matrix; that stretch reads WLIKTRFITQEMVGRQKKYRGIVHSMVSIYHEEGFRG. The helical transmembrane segment at 194 to 214 threads the bilayer; the sequence is LYKGLGPSLLGVLHVGVQFPL. The Mitochondrial intermembrane segment spans residues 215 to 230; the sequence is YEKFKSILKEKNKNKE. The chain crosses the membrane as a helical span at residues 231-251; sequence LGIVEIMIASSVSKIIASVVA. Residues 252-296 lie on the Mitochondrial matrix side of the membrane; the sequence is YPHEVLRARSQDSSPDSPNRTYRGNIIQMFKQIVREEGWRGLYRG. Residues 297 to 315 form a helical membrane-spanning segment; it reads MGVNLLRVTPSCVITFTSY. Over 316-329 the chain is Mitochondrial intermembrane; the sequence is EYIKKFLSQNQNHF.

Belongs to the mitochondrial carrier (TC 2.A.29) family.

The protein resides in the mitochondrion inner membrane. Mitochondrial solute carriers shuttle metabolites, nucleotides, and cofactors through the mitochondrial inner membrane. The protein is Mitochondrial substrate carrier family protein W (mcfW) of Dictyostelium discoideum (Social amoeba).